The primary structure comprises 89 residues: Large ribosomal subunit protein uL23cz/uL23cy (89 aa).

Belongs to the universal ribosomal protein uL23 family. Part of the 50S ribosomal subunit.

The protein localises to the plastid. It is found in the chloroplast. In terms of biological role, binds to 23S rRNA. In Pelargonium hortorum (Common geranium), this protein is Large ribosomal subunit protein uL23cz/uL23cy (rpl23-A).